Consider the following 324-residue polypeptide: tRNA-modifying protein YgfZ (324 aa).

A folate-binding site is contributed by Trp184.

Belongs to the tRNA-modifying YgfZ family.

It localises to the cytoplasm. Folate-binding protein involved in regulating the level of ATP-DnaA and in the modification of some tRNAs. It is probably a key factor in regulatory networks that act via tRNA modification, such as initiation of chromosomal replication. This chain is tRNA-modifying protein YgfZ, found in Vibrio vulnificus (strain CMCP6).